Reading from the N-terminus, the 99-residue chain is Large ribosomal subunit protein eL30 (99 aa).

This sequence belongs to the eukaryotic ribosomal protein eL30 family.

The sequence is that of Large ribosomal subunit protein eL30 from Methanobrevibacter smithii (strain ATCC 35061 / DSM 861 / OCM 144 / PS).